The following is a 332-amino-acid chain: MGKGGREKISSNEEEREGVMATDFFWSYTDEPHASRRRQILSCYPQIRQLFGPDPWAFLKITLVVILQLSTAAILHNSGWLKILSIAYFFGSFLNHNLFLAIHELSHNLAFSTPVYNRCLGIFANLPIGVPMSVTFQKYHLEHHRFQGVDGIDMDVPTYTEAHLVTNIFAKTIWVFLQLFFYALRPIFIKPKPPGYWEFINFLIQIVLDVSVVLFFGWRSFAYLILSTFVGGGMHPMAGHFISEHYVFNPNQETYSYYGPLNLLTWSVGYHNEHHDFPRIPGNKLHLVKEIAGEYYEGLESYKSWSQVIYMYIMDTTVGPYSRMKRKLSKSD.

The next 3 helical transmembrane spans lie at 55 to 75 (PWAFLKITLVVILQLSTAAIL), 83 to 103 (ILSIAYFFGSFLNHNLFLAIH), and 119 to 139 (CLGIFANLPIGVPMSVTFQKY). A Histidine box-1 motif is present at residues 103-107 (HELSH). Positions 140–144 (HLEHH) match the Histidine box-2 motif. Helical transmembrane passes span 164–184 (LVTNIFAKTIWVFLQLFFYAL), 197–217 (WEFINFLIQIVLDVSVVLFFG), and 222–242 (AYLILSTFVGGGMHPMAGHFI). Residues 271–275 (HNEHH) carry the Histidine box-3 motif.

It belongs to the fatty acid desaturase type 1 family. DEGS subfamily. Specifically expressed in flowers.

It is found in the endoplasmic reticulum membrane. It carries out the reaction an N-acylsphinganine + 2 Fe(II)-[cytochrome b5] + O2 + 2 H(+) = an N-acylsphing-4-enine + 2 Fe(III)-[cytochrome b5] + 2 H2O. Its function is as follows. Sphingolipid-delta-4-desaturase required for the biosynthesis of delta-4-unsaturated sphingolipids and derivatives. May be required for the biosynthesis of glucosylceramides. This is Sphingolipid delta(4)-desaturase DES1-like from Arabidopsis thaliana (Mouse-ear cress).